Reading from the N-terminus, the 532-residue chain is Ankyrin repeat-containing protein At2g01680 (532 aa).

7 ANK repeats span residues 9 to 38 (LTHQ…GDEL), 58 to 89 (AGET…TVKI), 93 to 122 (SDMN…ELCR), 127 to 156 (SNTS…SCAM), 161 to 190 (NGKT…AIVG), 195 to 224 (KGQT…TILN), and 229 to 259 (KGNT…EVNA). Transmembrane regions (helical) follow at residues 354 to 374 (ITVV…NLPG), 396 to 416 (VFCL…VVQI), 436 to 456 (LMWA…FAVV), and 467 to 487 (ITLL…YFVF).

It localises to the membrane. This is Ankyrin repeat-containing protein At2g01680 from Arabidopsis thaliana (Mouse-ear cress).